The following is a 555-amino-acid chain: Heterochromatin protein 1-binding protein 3 (555 aa).

Ala-2 is subject to N-acetylalanine. Ser-6 is modified (phosphoserine). Positions 29–134 (KLGEKVEDNT…KEKKVKKTIP (106 aa)) are disordered. Thr-51 bears the Phosphothreonine mark. Positions 51 to 67 (TPPKSKLAEGVEEKPEP) are enriched in basic and acidic residues. Residue Lys-64 forms a Glycyl lysine isopeptide (Lys-Gly) (interchain with G-Cter in SUMO2) linkage. Thr-85 carries the phosphothreonine modification. Lys-97 is covalently cross-linked (Glycyl lysine isopeptide (Lys-Gly) (interchain with G-Cter in SUMO2)). A compositionally biased stretch (basic and acidic residues) spans 100 to 127 (PENEEKEENKPSEETKKDEKDQSKEKEK). Ser-142, Ser-155, and Ser-156 each carry phosphoserine. The region spanning 157 to 232 (PRPKMDAILT…GASGSFVVVQ (76 aa)) is the H15 1 domain. Residue Lys-190 is modified to N6-acetyllysine. The disordered stretch occupies residues 227–254 (SFVVVQKSRKPPQKSRNRKNRSSAVDPE). Residues 233–247 (KSRKPPQKSRNRKNR) show a composition bias toward basic residues. A phosphoserine mark is found at Ser-248 and Ser-249. H15 domains are found at residues 255-330 (PQVK…QLKK) and 337-413 (LGGS…QLCF). Lys-258 is covalently cross-linked (Glycyl lysine isopeptide (Lys-Gly) (interchain with G-Cter in SUMO2)). Residues 422 to 555 (LFPKKEPDDS…TMKKSFKAKK (134 aa)) are disordered. Residues 430–452 (DSKDEDEDEDEDDSSEEDSEDEE) are compositionally biased toward acidic residues. 3 positions are modified to phosphoserine: Ser-443, Ser-444, and Ser-448. Positions 491–512 (GKTRPLPKKAPPKAKSPAKKAR) are enriched in basic residues. A compositionally biased stretch (low complexity) spans 513 to 532 (PSPSVIKKPSGSSSKKPAAS). Residues 545-555 (STMKKSFKAKK) show a composition bias toward basic residues.

Interacts (via PxVxL motif) with CBX5.

Its subcellular location is the nucleus. It is found in the chromosome. In terms of biological role, component of heterochromatin that maintains heterochromatin integrity during G1/S progression and regulates the duration of G1 phase to critically influence cell proliferative capacity. May play a role in hypoxia-induced oncogenesis. This chain is Heterochromatin protein 1-binding protein 3 (HP1BP3), found in Bos taurus (Bovine).